A 276-amino-acid chain; its full sequence is Vitamin B12-binding protein (276 aa).

The signal sequence occupies residues 1-20 (MLVIRLIACTFLFITPSLLA). Residues 27–274 (RIISLAPHAT…QVCTYLKIAQ (248 aa)) enclose the Fe/B12 periplasmic-binding domain. Cyanocob(III)alamin is bound at residue Tyr54. Cys187 and Cys267 are disulfide-bonded.

This sequence belongs to the BtuF family. The complex is composed of two ATP-binding proteins (BtuD), two transmembrane proteins (BtuC) and a solute-binding protein (BtuF).

The protein resides in the periplasm. Functionally, part of the ABC transporter complex BtuCDF involved in vitamin B12 import. Binds vitamin B12 and delivers it to the periplasmic surface of BtuC. In Vibrio cholerae serotype O1 (strain ATCC 39541 / Classical Ogawa 395 / O395), this protein is Vitamin B12-binding protein.